The chain runs to 200 residues: Ribonuclease HII (200 aa).

In terms of domain architecture, RNase H type-2 spans 11–200 (QSIAGVDEVG…VRRALISLTG (190 aa)). Positions 17, 18, and 109 each coordinate a divalent metal cation.

This sequence belongs to the RNase HII family. Mn(2+) serves as cofactor. It depends on Mg(2+) as a cofactor.

The protein localises to the cytoplasm. The enzyme catalyses Endonucleolytic cleavage to 5'-phosphomonoester.. Functionally, endonuclease that specifically degrades the RNA of RNA-DNA hybrids. The protein is Ribonuclease HII of Hamiltonella defensa subsp. Acyrthosiphon pisum (strain 5AT).